We begin with the raw amino-acid sequence, 181 residues long: UPF0398 protein lmo1889 (181 aa).

It belongs to the UPF0398 family.

The chain is UPF0398 protein lmo1889 from Listeria monocytogenes serovar 1/2a (strain ATCC BAA-679 / EGD-e).